Reading from the N-terminus, the 243-residue chain is tRNA (guanine-N(1)-)-methyltransferase (243 aa).

Residues glycine 108 and leucine 127–leucine 132 contribute to the S-adenosyl-L-methionine site.

It belongs to the RNA methyltransferase TrmD family. Homodimer.

It localises to the cytoplasm. The enzyme catalyses guanosine(37) in tRNA + S-adenosyl-L-methionine = N(1)-methylguanosine(37) in tRNA + S-adenosyl-L-homocysteine + H(+). Its function is as follows. Specifically methylates guanosine-37 in various tRNAs. This Streptococcus gordonii (strain Challis / ATCC 35105 / BCRC 15272 / CH1 / DL1 / V288) protein is tRNA (guanine-N(1)-)-methyltransferase.